Reading from the N-terminus, the 139-residue chain is Nucleoside diphosphate kinase (139 aa).

ATP is bound by residues Lys12, Phe60, Arg88, Thr94, Arg105, and Asn115. His118 serves as the catalytic Pros-phosphohistidine intermediate.

It belongs to the NDK family. As to quaternary structure, homotetramer. Mg(2+) is required as a cofactor.

The protein resides in the cytoplasm. The catalysed reaction is a 2'-deoxyribonucleoside 5'-diphosphate + ATP = a 2'-deoxyribonucleoside 5'-triphosphate + ADP. It catalyses the reaction a ribonucleoside 5'-diphosphate + ATP = a ribonucleoside 5'-triphosphate + ADP. Functionally, major role in the synthesis of nucleoside triphosphates other than ATP. The ATP gamma phosphate is transferred to the NDP beta phosphate via a ping-pong mechanism, using a phosphorylated active-site intermediate. The sequence is that of Nucleoside diphosphate kinase from Caldanaerobacter subterraneus subsp. tengcongensis (strain DSM 15242 / JCM 11007 / NBRC 100824 / MB4) (Thermoanaerobacter tengcongensis).